Reading from the N-terminus, the 387-residue chain is MASVGIVTPQSLRLNAPLPLRSGAVLDDCTLVYETYGTLNATRSNAVLVCHALNASHHVAGRYEGQDKSEGWWDNLIGPGKPLDTDRFFVIGVNNPGSCFGSTGPASTDPKTGRPYGADFPVVTVEDWVDAQARLLDALGIEQLAAVIGGSLGGMQAMSWTVRYPQRVRHAIVVASAPNLSAQNIAFNEVARRAIVTDPDFHGGHFYAHGVVPKRGLRVARMVGHITYLSDDVMASKFGRQTLNPELAYSTQDIEFQIESYLRYQGDKFSDYFDANTYLLITRALDYFDPAREFDGDLSRALAGATAKFLVVSFTTDWRFSPERSREIVKALVDNRRDVSYAEIDAPHGHDAFLMTDARYHNVLRAYFARIADEAVAPAGGIKGFAV.

The 310-residue stretch at 45 to 354 (NAVLVCHALN…DAPHGHDAFL (310 aa)) folds into the AB hydrolase-1 domain. The active-site Nucleophile is the serine 151. Arginine 221 serves as a coordination point for substrate. Active-site residues include aspartate 317 and histidine 350. Aspartate 351 is a substrate binding site.

This sequence belongs to the AB hydrolase superfamily. MetX family. Homodimer.

It localises to the cytoplasm. The catalysed reaction is L-homoserine + succinyl-CoA = O-succinyl-L-homoserine + CoA. The protein operates within amino-acid biosynthesis; L-methionine biosynthesis via de novo pathway; O-succinyl-L-homoserine from L-homoserine: step 1/1. Functionally, transfers a succinyl group from succinyl-CoA to L-homoserine, forming succinyl-L-homoserine. The protein is Homoserine O-succinyltransferase of Methylibium petroleiphilum (strain ATCC BAA-1232 / LMG 22953 / PM1).